Consider the following 387-residue polypeptide: Alpha-maltose-1-phosphate synthase (387 aa).

The protein belongs to the glycosyltransferase group 1 family.

The catalysed reaction is ADP-alpha-D-glucose + alpha-D-glucose 1-phosphate = alpha-maltose 1-phosphate + ADP + H(+). The protein operates within glycan biosynthesis; glycogen biosynthesis. Involved in the biosynthesis of the maltose-1-phosphate (M1P) building block required for alpha-glucan production by the key enzyme GlgE. Catalyzes the formation of an alpha-1,4 linkage between glucose from ADP-glucose and glucose 1-phosphate (G1P) to yield maltose-1-phosphate (M1P). The polypeptide is Alpha-maltose-1-phosphate synthase (Mycolicibacterium smegmatis (strain ATCC 700084 / mc(2)155) (Mycobacterium smegmatis)).